The primary structure comprises 208 residues: Large ribosomal subunit protein eL13 (208 aa).

A phosphoserine mark is found at serine 177 and serine 180.

This sequence belongs to the eukaryotic ribosomal protein eL13 family. As to quaternary structure, component of the large ribosomal subunit (LSU). Mature yeast ribosomes consist of a small (40S) and a large (60S) subunit. The 40S small subunit contains 1 molecule of ribosomal RNA (18S rRNA) and at least 33 different proteins. The large 60S subunit contains 3 rRNA molecules (25S, 5.8S and 5S rRNA) and at least 46 different proteins.

It is found in the cytoplasm. In terms of biological role, component of the ribosome, a large ribonucleoprotein complex responsible for the synthesis of proteins in the cell. The small ribosomal subunit (SSU) binds messenger RNAs (mRNAs) and translates the encoded message by selecting cognate aminoacyl-transfer RNA (tRNA) molecules. The large subunit (LSU) contains the ribosomal catalytic site termed the peptidyl transferase center (PTC), which catalyzes the formation of peptide bonds, thereby polymerizing the amino acids delivered by tRNAs into a polypeptide chain. The nascent polypeptides leave the ribosome through a tunnel in the LSU and interact with protein factors that function in enzymatic processing, targeting, and the membrane insertion of nascent chains at the exit of the ribosomal tunnel. The chain is Large ribosomal subunit protein eL13 (rpl13) from Schizosaccharomyces pombe (strain 972 / ATCC 24843) (Fission yeast).